We begin with the raw amino-acid sequence, 655 residues long: Very long-chain specific acyl-CoA dehydrogenase, mitochondrial (655 aa).

A mitochondrion-targeting transit peptide spans 1–40 (MRAARMAQSTGRQLLRLRGVSSWPGELLGQPRPGPARRPY). Residues 22 to 66 (SWPGELLGQPRPGPARRPYASGVAQAAVDQSDSQPSEASTREKRA) are disordered. The segment at 41–482 (ASGVAQAAVD…ALQGCMDKGK (442 aa)) is catalytic. Polar residues predominate over residues 49-59 (VDQSDSQPSEA). Lys71 carries the post-translational modification N6-acetyllysine; alternate. Position 71 is an N6-succinyllysine; alternate (Lys71). N6-succinyllysine is present on Lys195. 214-223 (FCLTEPSSGS) lines the FAD pocket. Cys237 is modified (S-nitrosocysteine). N6-acetyllysine; alternate is present on Lys239. An N6-succinyllysine; alternate modification is found at Lys239. 249–251 (WIS) serves as a coordination point for FAD. N6-acetyllysine; alternate occurs at positions 276 and 278. N6-succinyllysine; alternate occurs at positions 276 and 278. Lys298 carries the N6-acetyllysine modification. Lys331 carries the N6-acetyllysine; alternate modification. Lys331 carries the post-translational modification N6-succinyllysine; alternate. Lys372 is subject to N6-succinyllysine. 461–463 (FEG) provides a ligand contact to substrate. The active-site Proton acceptor is the Glu462. 464–466 (TND) serves as a coordination point for FAD. Lys482 is subject to N6-acetyllysine; alternate. Lys482 bears the N6-succinyllysine; alternate mark. A membrane-anchoring region spans residues 483–516 (ELSGLGNALKNPFGNAGLLLGEAGKQLRRRAGLG). 2 positions are modified to phosphoserine: Ser517 and Ser522. Residue Lys550 is modified to N6-acetyllysine. Lys556 bears the N6-acetyllysine; alternate mark. Residue Lys556 is modified to N6-succinyllysine; alternate. Residue Gln562 coordinates FAD. Lys639 carries the N6-succinyllysine modification.

It belongs to the acyl-CoA dehydrogenase family. As to quaternary structure, homodimer. Homodimerizes after import into the mitochondrion. FAD is required as a cofactor. In terms of processing, S-nitrosylation at Cys-237 in liver improves catalytic efficiency.

It localises to the mitochondrion inner membrane. It carries out the reaction a very-long-chain 2,3-saturated fatty acyl-CoA + oxidized [electron-transfer flavoprotein] + H(+) = a very-long-chain (2E)-enoyl-CoA + reduced [electron-transfer flavoprotein]. The catalysed reaction is dodecanoyl-CoA + oxidized [electron-transfer flavoprotein] + H(+) = (2E)-dodecenoyl-CoA + reduced [electron-transfer flavoprotein]. It catalyses the reaction tetradecanoyl-CoA + oxidized [electron-transfer flavoprotein] + H(+) = (2E)-tetradecenoyl-CoA + reduced [electron-transfer flavoprotein]. The enzyme catalyses oxidized [electron-transfer flavoprotein] + hexadecanoyl-CoA + H(+) = (2E)-hexadecenoyl-CoA + reduced [electron-transfer flavoprotein]. It carries out the reaction octadecanoyl-CoA + oxidized [electron-transfer flavoprotein] + H(+) = (2E)-octadecenoyl-CoA + reduced [electron-transfer flavoprotein]. The catalysed reaction is eicosanoyl-CoA + oxidized [electron-transfer flavoprotein] + H(+) = (2E)-eicosenoyl-CoA + reduced [electron-transfer flavoprotein]. It catalyses the reaction docosanoyl-CoA + oxidized [electron-transfer flavoprotein] + H(+) = (2E)-docosenoyl-CoA + reduced [electron-transfer flavoprotein]. The enzyme catalyses tetracosanoyl-CoA + oxidized [electron-transfer flavoprotein] + H(+) = (2E)-tetracosenoyl-CoA + reduced [electron-transfer flavoprotein]. Its pathway is lipid metabolism; mitochondrial fatty acid beta-oxidation. Its function is as follows. Very long-chain specific acyl-CoA dehydrogenase is one of the acyl-CoA dehydrogenases that catalyze the first step of mitochondrial fatty acid beta-oxidation, an aerobic process breaking down fatty acids into acetyl-CoA and allowing the production of energy from fats. The first step of fatty acid beta-oxidation consists in the removal of one hydrogen from C-2 and C-3 of the straight-chain fatty acyl-CoA thioester, resulting in the formation of trans-2-enoyl-CoA. Among the different mitochondrial acyl-CoA dehydrogenases, very long-chain specific acyl-CoA dehydrogenase acts specifically on acyl-CoAs with saturated 12 to 24 carbons long primary chains. In Bos taurus (Bovine), this protein is Very long-chain specific acyl-CoA dehydrogenase, mitochondrial.